Consider the following 311-residue polypeptide: Mediator of RNA polymerase II transcription subunit 27 (311 aa).

Residue Ser-132 is modified to Phosphoserine. Residue Lys-134 is modified to N6-methyllysine.

It belongs to the Mediator complex subunit 27 family. Component of the Mediator complex, which is composed of MED1, MED4, MED6, MED7, MED8, MED9, MED10, MED11, MED12, MED13, MED13L, MED14, MED15, MED16, MED17, MED18, MED19, MED20, MED21, MED22, MED23, MED24, MED25, MED26, MED27, MED29, MED30, MED31, CCNC, CDK8 and CDC2L6/CDK11. The MED12, MED13, CCNC and CDK8 subunits form a distinct module termed the CDK8 module. Mediator containing the CDK8 module is less active than Mediator lacking this module in supporting transcriptional activation. Individual preparations of the Mediator complex lacking one or more distinct subunits have been variously termed ARC, CRSP, DRIP, PC2, SMCC and TRAP.

The protein resides in the nucleus. Component of the Mediator complex, a coactivator involved in the regulated transcription of nearly all RNA polymerase II-dependent genes. Mediator functions as a bridge to convey information from gene-specific regulatory proteins to the basal RNA polymerase II transcription machinery. Mediator is recruited to promoters by direct interactions with regulatory proteins and serves as a scaffold for the assembly of a functional preinitiation complex with RNA polymerase II and the general transcription factors. In Mus musculus (Mouse), this protein is Mediator of RNA polymerase II transcription subunit 27 (Med27).